The chain runs to 549 residues: MAESTAHTSPSLNDKEREVDQGILSDESGPAEEVKETPDQERSVQGVRWLLICIAVFSANLLYGLDNTIVADIQGAVAGTFEEYAQLGWLGVGFTLGSVVFILPLGKAYAIFDTKWLFIGCLTMFAAGSALCGGAPNMDAIIVGRVWAGAGGAGMYLGNLNLITILTTPKEQPVYVGLVGLIYGVGCILGPIIGGAFADSSATWRWGFYINLIIFGIMAPIYVFLLPSLPRPAGEGRSFINRLRELDWVGTVLSAGMHVSFILFIVFGGVMWPWTDGRNIALYVVAAVTLIAFALSQYFCVLTDKENRLFPGEFLRNPTMIALYVLMACGGAALFVAVYYIPLYFQFVHGDSGIMSAVRLLPFICFYVATILLCGWLMPKTGYYVLWYLLSGIFMVIGSATMYTVKYDTKVANIYGYSILLGLGMATTQAAYAVGPSLVTPDRVAESIQFMNIGQGQSQLLGLAIASAIFQSETLSGLNALLAGKGYSQGDIQGAIAGARSTLLTELPADLKTKALDVIVHSIDDVYVMAIAAGALYVIASCFLPWRRF.

Polar residues predominate over residues 1 to 12 (MAESTAHTSPSL). The disordered stretch occupies residues 1 to 40 (MAESTAHTSPSLNDKEREVDQGILSDESGPAEEVKETPDQ). A run of 14 helical transmembrane segments spans residues 50–70 (LLICIAVFSANLLYGLDNTIV), 85–105 (AQLGWLGVGFTLGSVVFILPL), 116–136 (WLFIGCLTMFAAGSALCGGAP), 146–166 (VWAGAGGAGMYLGNLNLITIL), 178–198 (LVGLIYGVGCILGPIIGGAFA), 206–226 (WGFYINLIIFGIMAPIYVFLL), 252–272 (VLSAGMHVSFILFIVFGGVMW), 282–302 (LYVVAAVTLIAFALSQYFCVL), 321–341 (IALYVLMACGGAALFVAVYYI), 360–380 (LLPFICFYVATILLCGWLMPK), 385–405 (VLWYLLSGIFMVIGSATMYTV), 419–439 (ILLGLGMATTQAAYAVGPSLV), 460–482 (LLGLAIASAIFQSETLSGLNALL), and 526–546 (VYVMAIAAGALYVIASCFLPW).

The protein belongs to the major facilitator superfamily. TCR/Tet family.

It localises to the vacuole membrane. The protein localises to the cell membrane. Efflux pump; part of the gene cluster that mediates the biosynthesis of patulin, an acetate-derived tetraketide mycotoxin produced by several fungal species that shows antimicrobial properties against several bacteria. May be involved in the secretion of E-ascladiol to be converted to patulin by the secreted patulin synthase patE. This Aspergillus clavatus (strain ATCC 1007 / CBS 513.65 / DSM 816 / NCTC 3887 / NRRL 1 / QM 1276 / 107) protein is Efflux pump patC.